The chain runs to 373 residues: LIM domain-binding protein 2 (373 aa).

Disordered stretches follow at residues 244 to 287 and 327 to 373; these read APPA…KTPA and QYDA…QASQ. A compositionally biased stretch (low complexity) spans 263–280; it reads STSSTSNSSAGNTTNSAG. Positions 298 to 337 constitute an LIM interaction domain (LID) domain; that stretch reads DVMVVGEPTLMGGEFGDEDERLITRLENTQYDAANGMDDE. Residues 341 to 373 are compositionally biased toward polar residues; it reads NNSPALGNNSPWNSKPPATQETKSENAPPQASQ.

It belongs to the LDB family. Interacts with LHX9. Interacts with SLK; leading to negatively regulate SLK kinase activity. Interacts with LMO4. As to quaternary structure, interacts with PITX1. Interacts with LHX3. In terms of processing, ubiquitinated by RLIM/RNF12, leading to its degradation by the proteasome. Expressed in multiple tissues including heart, brain, liver, kidney, testis, lung and muscle, with expression highest in the brain, trigeminal ganglia, and lung.

The protein localises to the nucleus. In terms of biological role, transcription cofactor. Binds to the LIM domain of a wide variety of LIM domain-containing transcription factors. Functionally, regulates the transcriptional activity of LIM-containing proteins such as LHX3 or PITX1. The polypeptide is LIM domain-binding protein 2 (Ldb2) (Mus musculus (Mouse)).